A 231-amino-acid chain; its full sequence is Lipoprotein-releasing system ATP-binding protein LolD (231 aa).

Positions 6–230 constitute an ABC transporter domain; it reads LSCKNVSKKY…DGELELVINS (225 aa). Residue 42–49 participates in ATP binding; the sequence is GLSGSGKT.

The protein belongs to the ABC transporter superfamily. Lipoprotein translocase (TC 3.A.1.125) family. The complex is composed of two ATP-binding proteins (LolD) and two transmembrane proteins (LolC and LolE).

It is found in the cell inner membrane. Its function is as follows. Part of the ABC transporter complex LolCDE involved in the translocation of mature outer membrane-directed lipoproteins, from the inner membrane to the periplasmic chaperone, LolA. Responsible for the formation of the LolA-lipoprotein complex in an ATP-dependent manner. This is Lipoprotein-releasing system ATP-binding protein LolD from Francisella tularensis subsp. tularensis (strain FSC 198).